Consider the following 355-residue polypeptide: Uroporphyrinogen decarboxylase (355 aa).

Substrate-binding positions include 36-40, Asp-85, Tyr-160, Ser-215, and His-334; that span reads RQAGR.

It belongs to the uroporphyrinogen decarboxylase family. In terms of assembly, homodimer.

It is found in the cytoplasm. It catalyses the reaction uroporphyrinogen III + 4 H(+) = coproporphyrinogen III + 4 CO2. It participates in porphyrin-containing compound metabolism; protoporphyrin-IX biosynthesis; coproporphyrinogen-III from 5-aminolevulinate: step 4/4. In terms of biological role, catalyzes the decarboxylation of four acetate groups of uroporphyrinogen-III to yield coproporphyrinogen-III. The protein is Uroporphyrinogen decarboxylase of Rhodococcus jostii (strain RHA1).